The sequence spans 237 residues: Large ribosomal subunit protein uL3 (237 aa).

Disordered stretches follow at residues 133–155 (ASHG…DPGK) and 213–237 (PENA…EGGE). The segment covering 135–150 (HGNSITHRSHGSTGQR) has biased composition (polar residues). Glutamine 151 carries the N5-methylglutamine modification. Over residues 220 to 237 (AGLRAGAKAEAAATEGGE) the composition is skewed to low complexity.

The protein belongs to the universal ribosomal protein uL3 family. In terms of assembly, part of the 50S ribosomal subunit. Forms a cluster with proteins L14 and L19. In terms of processing, methylated by PrmB.

Functionally, one of the primary rRNA binding proteins, it binds directly near the 3'-end of the 23S rRNA, where it nucleates assembly of the 50S subunit. The polypeptide is Large ribosomal subunit protein uL3 (Brucella abortus (strain S19)).